Consider the following 306-residue polypeptide: Pantothenate kinase (306 aa).

ATP is bound at residue 91–98 (GSVAVGKS).

The protein belongs to the prokaryotic pantothenate kinase family.

It localises to the cytoplasm. It carries out the reaction (R)-pantothenate + ATP = (R)-4'-phosphopantothenate + ADP + H(+). It functions in the pathway cofactor biosynthesis; coenzyme A biosynthesis; CoA from (R)-pantothenate: step 1/5. This is Pantothenate kinase from Streptococcus pneumoniae serotype 2 (strain D39 / NCTC 7466).